Reading from the N-terminus, the 231-residue chain is Probable intron-encoded endonuclease 1 (231 aa).

Belongs to the LAGLIDADG endonuclease family.

The protein resides in the mitochondrion. Endonuclease involved in mitochondrial 21S rRNA gene intron homing. This is Probable intron-encoded endonuclease 1 from Wickerhamomyces canadensis (Yeast).